Here is a 185-residue protein sequence, read N- to C-terminus: Ribosome-recycling factor (185 aa).

This sequence belongs to the RRF family.

The protein resides in the cytoplasm. Responsible for the release of ribosomes from messenger RNA at the termination of protein biosynthesis. May increase the efficiency of translation by recycling ribosomes from one round of translation to another. This is Ribosome-recycling factor from Wolbachia pipientis wMel.